A 489-amino-acid chain; its full sequence is Rhamnulokinase (489 aa).

13-17 (ASSGR) provides a ligand contact to ATP. Cysteine 68 and cysteine 222 are joined by a disulfide. Substrate is bound by residues glycine 83 and 236 to 238 (HDT). Residue aspartate 237 is the Proton acceptor of the active site. Residue threonine 259 participates in ATP binding. Residue asparagine 296 participates in substrate binding. Glutamine 304 serves as a coordination point for ATP. Residues cysteine 353 and cysteine 370 are joined by a disulfide bond. Glycine 402 is a binding site for ATP. Cysteine 413 and cysteine 417 form a disulfide bridge.

The protein belongs to the rhamnulokinase family. It depends on Mg(2+) as a cofactor.

It catalyses the reaction L-rhamnulose + ATP = L-rhamnulose 1-phosphate + ADP + H(+). It functions in the pathway carbohydrate degradation; L-rhamnose degradation; glycerone phosphate from L-rhamnose: step 2/3. Involved in the catabolism of L-rhamnose (6-deoxy-L-mannose). Catalyzes the transfer of the gamma-phosphate group from ATP to the 1-hydroxyl group of L-rhamnulose to yield L-rhamnulose 1-phosphate. The chain is Rhamnulokinase from Salmonella agona (strain SL483).